The chain runs to 715 residues: Protein naked cuticle homolog (715 aa).

In terms of domain architecture, EF-hand spans 18–53; sequence KKPQPLQFSFTLYDLDGHGKITKDDIAGIVSTIYES. A disordered region spans residues 256-282; that stretch reads SRAKRKVVRKSRSSRKASKLTDDFSRP. The span at 257–273 shows a compositional bias: basic residues; sequence RAKRKVVRKSRSSRKAS. Residues 305-334 are required for nuclear localization and inhibition of Wnt signaling; sequence ECWKSSLCRRELIEIIRDSMVKNSLCFQPN. The tract at residues 639–690 is disordered; sequence ELHQSVQQQQGTHQQQQQPQSSVSSPTHHHHHHAGASLLGENSGSSASAAST. Composition is skewed to low complexity over residues 642-664 and 673-690; these read QSVQ…VSSP and GASL…AAST.

Belongs to the NKD family.

Its subcellular location is the cell membrane. It localises to the cytoplasm. The protein resides in the nucleus. Functionally, cell autonomous antagonist of the canonical Wnt signaling pathway. May activate a second Wnt signaling pathway that controls planar cell polarity. Required for neuroblast specification. This is Protein naked cuticle homolog from Aedes aegypti (Yellowfever mosquito).